We begin with the raw amino-acid sequence, 116 residues long: Putative antiporter subunit mnhC2 (116 aa).

The next 3 helical transmembrane spans lie at 3 to 23, 28 to 48, and 72 to 92; these read LILL…ILSV, IVIG…SMGN, and AIVL…LVLV.

The protein belongs to the CPA3 antiporters (TC 2.A.63) subunit C family. As to quaternary structure, may form a heterooligomeric complex that consists of seven subunits: mnhA2, mnhB2, mnhC2, mnhD2, mnhE2, mnhF2 and mnhG2.

It localises to the cell membrane. In Staphylococcus saprophyticus subsp. saprophyticus (strain ATCC 15305 / DSM 20229 / NCIMB 8711 / NCTC 7292 / S-41), this protein is Putative antiporter subunit mnhC2 (mnhC2).